A 252-amino-acid polypeptide reads, in one-letter code: Thiazole synthase (252 aa).

Lysine 98 (schiff-base intermediate with DXP) is an active-site residue. Residues glycine 159, alanine 185–glycine 186, and alanine 207–threonine 208 each bind 1-deoxy-D-xylulose 5-phosphate.

It belongs to the ThiG family. Homotetramer. Forms heterodimers with either ThiH or ThiS.

It is found in the cytoplasm. The enzyme catalyses [ThiS sulfur-carrier protein]-C-terminal-Gly-aminoethanethioate + 2-iminoacetate + 1-deoxy-D-xylulose 5-phosphate = [ThiS sulfur-carrier protein]-C-terminal Gly-Gly + 2-[(2R,5Z)-2-carboxy-4-methylthiazol-5(2H)-ylidene]ethyl phosphate + 2 H2O + H(+). It functions in the pathway cofactor biosynthesis; thiamine diphosphate biosynthesis. Functionally, catalyzes the rearrangement of 1-deoxy-D-xylulose 5-phosphate (DXP) to produce the thiazole phosphate moiety of thiamine. Sulfur is provided by the thiocarboxylate moiety of the carrier protein ThiS. In vitro, sulfur can be provided by H(2)S. This chain is Thiazole synthase, found in Mycolicibacterium smegmatis (strain ATCC 700084 / mc(2)155) (Mycobacterium smegmatis).